A 283-amino-acid chain; its full sequence is Bifunctional protein FolD (283 aa).

NADP(+) contacts are provided by residues 164-166 (GRS), Ser-189, and Ile-230.

It belongs to the tetrahydrofolate dehydrogenase/cyclohydrolase family. Homodimer.

It carries out the reaction (6R)-5,10-methylene-5,6,7,8-tetrahydrofolate + NADP(+) = (6R)-5,10-methenyltetrahydrofolate + NADPH. The catalysed reaction is (6R)-5,10-methenyltetrahydrofolate + H2O = (6R)-10-formyltetrahydrofolate + H(+). Its pathway is one-carbon metabolism; tetrahydrofolate interconversion. Catalyzes the oxidation of 5,10-methylenetetrahydrofolate to 5,10-methenyltetrahydrofolate and then the hydrolysis of 5,10-methenyltetrahydrofolate to 10-formyltetrahydrofolate. The polypeptide is Bifunctional protein FolD (Lactobacillus delbrueckii subsp. bulgaricus (strain ATCC BAA-365 / Lb-18)).